A 109-amino-acid chain; its full sequence is Nucleoid-associated protein HI_0442 (109 aa).

It belongs to the YbaB/EbfC family. Homodimer.

It localises to the cytoplasm. The protein resides in the nucleoid. In terms of biological role, binds to DNA and alters its conformation. May be involved in regulation of gene expression, nucleoid organization and DNA protection. The sequence is that of Nucleoid-associated protein HI_0442 from Haemophilus influenzae (strain ATCC 51907 / DSM 11121 / KW20 / Rd).